The following is a 439-amino-acid chain: L-tryptophan decarboxylase (439 aa).

The protein belongs to the phosphatidylserine decarboxylase family.

It carries out the reaction L-tryptophan + H(+) = tryptamine + CO2. It functions in the pathway secondary metabolite biosynthesis. In terms of biological role, L-tryptophan decarboxylase; part of the gene cluster that mediates the biosynthesis of psilocybin, a psychotropic tryptamine-derived natural product. The first step in the pathway is the decarboxylation of L-tryptophan to tryptamine by the decarboxylase psiD. PsiD does not decarboxylate phenylalanine, tyrosine, or 5-hydroxy- L -tryptophan (5-HTP). 4-hydroxy-L-tryptophan is accepted as substrate by psiD as well. The cytochrome P450 monooxygenase psiH then converts tryptamine to 4-hydroxytryptamine. The kinase psiK catalyzes the 4-O-phosphorylation step by converting 4-hydroxytryptamine into norbaeocystin. The methyltransferase psiM then catalyzes iterative methyl transfer to the amino group of norbaeocystin to yield psilocybin via a monomethylated intermediate, baeocystin. 4-hydroxy-6-methyl-l-tryptophancan also be converted the decarboxylase PsiD, kinase PsiK, and methyltransferase PsiM into respectively 6-methyl-norbaeocystin, 6-methylbaeocystin, and 6-methylpsilocybin. The chain is L-tryptophan decarboxylase from Psilocybe cyanescens.